An 88-amino-acid chain; its full sequence is MEQKSYVIIDETGIHARPATMLVQTASKFDSDIQLEYNGKKVNLKSIMGVMSLGVGKDAEITIYADGSDETDAIEAITDILSKEGLTK.

Positions 1 to 88 (MEQKSYVIID…DILSKEGLTK (88 aa)) constitute an HPr domain. His15 acts as the Pros-phosphohistidine intermediate in catalysis. Ser46 is modified (phosphoserine; by HPrK/P).

The protein belongs to the HPr family.

It localises to the cytoplasm. With respect to regulation, phosphorylation on Ser-46 inhibits the phosphoryl transfer from enzyme I to HPr. General (non sugar-specific) component of the phosphoenolpyruvate-dependent sugar phosphotransferase system (sugar PTS). This major carbohydrate active-transport system catalyzes the phosphorylation of incoming sugar substrates concomitantly with their translocation across the cell membrane. The phosphoryl group from phosphoenolpyruvate (PEP) is transferred to the phosphoryl carrier protein HPr by enzyme I. Phospho-HPr then transfers it to the PTS EIIA domain. This Staphylococcus xylosus protein is Phosphocarrier protein HPr (ptsH).